The primary structure comprises 583 residues: Sensor protein SrrB (583 aa).

Residues 1-11 (MMSRLNSVVIK) lie on the Cytoplasmic side of the membrane. Residues 12–32 (LWLTIILIVTTVLILLSIALI) traverse the membrane as a helical segment. Residues 33 to 174 (TFMQYYFTQE…SIEDTNNAIT (142 aa)) are Extracellular-facing. Residues 175-195 (IITIITAVIFLTITTVFAFFL) traverse the membrane as a helical segment. The Cytoplasmic segment spans residues 196-583 (SSRITKPLRR…TFIIKLPKPE (388 aa)). The 53-residue stretch at 197–249 (SRITKPLRRLRDQATRVSEGDYSYKPSVTTKDEIGQLSQAFNQMSTEIEEHVD) folds into the HAMP domain. The Histidine kinase domain occupies 366–583 (NVSHELRTPI…TFIIKLPKPE (218 aa)). At His369 the chain carries Phosphohistidine; by autocatalysis.

It localises to the cell membrane. The catalysed reaction is ATP + protein L-histidine = ADP + protein N-phospho-L-histidine.. Functionally, member of the two-component regulatory system SrrA/SrrB, which is involved in the global regulation of staphylococcal virulence factors in response to environmental oxygen levels as well as biofilm formation. Also plays an essential role in host-derived nitric oxide resistance by regulating hmp/flavohemoglobin, an enzyme that detoxifies nitric oxide by converting it to nitrate. Functions as a sensor protein kinase which is autophosphorylated at a histidine residue and transfers its phosphate group to SrrA. In turn, SrrA binds to the upstream promoter regions of the target genes to positively and negatively regulate their expression. This Staphylococcus aureus (strain MRSA252) protein is Sensor protein SrrB (srrB).